The chain runs to 212 residues: Spore germination lipase LipC (212 aa).

Ser11 acts as the Nucleophile in catalysis. Gly50 and Asn82 together coordinate substrate. Residues Asp186 and His189 contribute to the active site.

It belongs to the 'GDSL' lipolytic enzyme family.

It localises to the spore coat. Its function is as follows. Lipase involved in spore germination. The sequence is that of Spore germination lipase LipC (lipC) from Bacillus licheniformis (strain ATCC 14580 / DSM 13 / JCM 2505 / CCUG 7422 / NBRC 12200 / NCIMB 9375 / NCTC 10341 / NRRL NRS-1264 / Gibson 46).